Here is a 525-residue protein sequence, read N- to C-terminus: GMP synthase [glutamine-hydrolyzing] (525 aa).

The region spanning 9–207 is the Glutamine amidotransferase type-1 domain; it reads RILILDFGSQ…VLDICQCEAL (199 aa). The Nucleophile role is filled by Cys-86. Catalysis depends on residues His-181 and Glu-183. The GMPS ATP-PPase domain occupies 208-400; sequence WTPATIIEDA…LGLPYDMLFR (193 aa). 235–241 contributes to the ATP binding site; it reads SGGVDSS.

As to quaternary structure, homodimer.

It carries out the reaction XMP + L-glutamine + ATP + H2O = GMP + L-glutamate + AMP + diphosphate + 2 H(+). It participates in purine metabolism; GMP biosynthesis; GMP from XMP (L-Gln route): step 1/1. Catalyzes the synthesis of GMP from XMP. The polypeptide is GMP synthase [glutamine-hydrolyzing] (Serratia proteamaculans (strain 568)).